The following is a 30-amino-acid chain: Urease subunit alpha (30 aa).

It belongs to the metallo-dependent hydrolases superfamily. Urease alpha subunit family. In terms of assembly, heterotrimer of UreA (gamma), UreB (beta) and UreC (alpha) subunits. Three heterotrimers associate to form the active enzyme. Ni cation serves as cofactor.

It is found in the cytoplasm. The catalysed reaction is urea + 2 H2O + H(+) = hydrogencarbonate + 2 NH4(+). It participates in nitrogen metabolism; urea degradation; CO(2) and NH(3) from urea (urease route): step 1/1. The sequence is that of Urease subunit alpha (ureC) from Escherichia coli.